The primary structure comprises 276 residues: Large ribosomal subunit protein uL2 (276 aa).

Residues Val-224–Lys-276 are disordered. Basic residues predominate over residues Lys-258–Lys-276.

It belongs to the universal ribosomal protein uL2 family. As to quaternary structure, part of the 50S ribosomal subunit. Forms a bridge to the 30S subunit in the 70S ribosome.

Its function is as follows. One of the primary rRNA binding proteins. Required for association of the 30S and 50S subunits to form the 70S ribosome, for tRNA binding and peptide bond formation. It has been suggested to have peptidyltransferase activity; this is somewhat controversial. Makes several contacts with the 16S rRNA in the 70S ribosome. In Geobacillus thermodenitrificans (strain NG80-2), this protein is Large ribosomal subunit protein uL2.